Here is a 264-residue protein sequence, read N- to C-terminus: Hemin import ATP-binding protein HmuV (264 aa).

One can recognise an ABC transporter domain in the interval I2–A241. Residue G34 to T41 coordinates ATP.

It belongs to the ABC transporter superfamily. Heme (hemin) importer (TC 3.A.1.14.5) family. As to quaternary structure, the complex is composed of two ATP-binding proteins (HmuV), two transmembrane proteins (HmuU) and a solute-binding protein (HmuT).

Its subcellular location is the cell inner membrane. Part of the ABC transporter complex HmuTUV involved in hemin import. Responsible for energy coupling to the transport system. This Rhizobium etli (strain ATCC 51251 / DSM 11541 / JCM 21823 / NBRC 15573 / CFN 42) protein is Hemin import ATP-binding protein HmuV.